The sequence spans 151 residues: Peptide methionine sulfoxide reductase MsrB (151 aa).

Positions 9–132 constitute a MsrB domain; the sequence is DGELKRTLTK…NSAALKFIPF (124 aa). Cys-121 serves as the catalytic Nucleophile.

It belongs to the MsrB Met sulfoxide reductase family.

It catalyses the reaction L-methionyl-[protein] + [thioredoxin]-disulfide + H2O = L-methionyl-(R)-S-oxide-[protein] + [thioredoxin]-dithiol. The polypeptide is Peptide methionine sulfoxide reductase MsrB (Mycoplasma pneumoniae (strain ATCC 29342 / M129 / Subtype 1) (Mycoplasmoides pneumoniae)).